The chain runs to 202 residues: Adenylyl-sulfate kinase (202 aa).

An ATP-binding site is contributed by 35–42 (GLSGSGKS). The Phosphoserine intermediate role is filled by Ser109.

This sequence belongs to the APS kinase family.

It carries out the reaction adenosine 5'-phosphosulfate + ATP = 3'-phosphoadenylyl sulfate + ADP + H(+). The protein operates within sulfur metabolism; hydrogen sulfide biosynthesis; sulfite from sulfate: step 2/3. Functionally, catalyzes the synthesis of activated sulfate. This chain is Adenylyl-sulfate kinase, found in Bacteroides fragilis (strain ATCC 25285 / DSM 2151 / CCUG 4856 / JCM 11019 / LMG 10263 / NCTC 9343 / Onslow / VPI 2553 / EN-2).